The following is a 368-amino-acid chain: Propane 2-monooxygenase, hydroxylase component small subunit (368 aa).

This sequence belongs to the TmoE/XamoE family. As to quaternary structure, the propane 2-monooxygenase multicomponent enzyme system is composed of an electron transfer component and a monooxygenase component interacting with the effector protein PrmD. The electron transfer component is composed of a reductase (PrmB), and the monooxygenase component is formed by a large subunit (PrmA) and a small subunit (PrmC). Probably requires the presence of the chaperonin-like protein PrmG to ensure a productive folding, resulting of a soluble PrmC, which leads to the active form of PrmABCD.

It carries out the reaction propane + NADH + O2 + H(+) = propan-2-ol + NAD(+) + H2O. Functionally, component of the propane 2-monooxygenase multicomponent enzyme system which is involved in the degradation of propane via the O2-dependent hydroxylation of propane. Also able to catalyze the oxidation the water contaminant N-nitrosodimethylamine (NDMA). The chain is Propane 2-monooxygenase, hydroxylase component small subunit from Rhodococcus jostii (strain RHA1).